The sequence spans 1276 residues: Probable ubiquitin carboxyl-terminal hydrolase K02C4.3 (1276 aa).

The region spanning 168–762 is the USP domain; it reads TGLYNSGNTC…SAYMLMYVRS (595 aa). Cys177 acts as the Nucleophile in catalysis. The disordered stretch occupies residues 375-402; that stretch reads SMDTEAATSSNLPGNSVENHPNPAAPEV. Polar residues predominate over residues 380-393; sequence AATSSNLPGNSVEN. The active-site Proton acceptor is His707.

This sequence belongs to the peptidase C19 family.

It catalyses the reaction Thiol-dependent hydrolysis of ester, thioester, amide, peptide and isopeptide bonds formed by the C-terminal Gly of ubiquitin (a 76-residue protein attached to proteins as an intracellular targeting signal).. The protein is Probable ubiquitin carboxyl-terminal hydrolase K02C4.3 of Caenorhabditis elegans.